We begin with the raw amino-acid sequence, 921 residues long: Sodium/calcium exchanger 2 (921 aa).

The first 20 residues, 1–20 (MAPLALVGVTLLLAAPPCSG), serve as a signal peptide directing secretion. The Extracellular segment spans residues 21-68 (AATPTPSLPPPPANDSDTSTGGCQGSYRCQPGVLLPVWEPDDPSLGDK). The segment at 22 to 42 (ATPTPSLPPPPANDSDTSTGG) is disordered. N-linked (GlcNAc...) asparagine glycosylation occurs at N34. Residues 69–90 (AARAVVYFVAMVYMFLGVSIIA) form a helical membrane-spanning segment. Residues 91-130 (DRFMAAIEVITSKEKEITITKANGETSVGTVRIWNETVSN) are Cytoplasmic-facing. The helical transmembrane segment at 131–152 (LTLMALGSSAPEILLSVIEVCG) threads the bilayer. One copy of the Alpha-1 repeat lies at 135–175 (ALGSSAPEILLSVIEVCGHNFQAGELGPGTIVGSAAFNMFV). Residues 153–164 (HNFQAGELGPGT) are Extracellular-facing. A helical transmembrane segment spans residues 165–185 (IVGSAAFNMFVVIAVCIYVIP). The Cytoplasmic segment spans residues 186–196 (AGESRKIKHLR). A helical membrane pass occupies residues 197-219 (VFFVTASWSIFAYVWLYLILAVF). Topologically, residues 220 to 222 (SPG) are extracellular. The helical transmembrane segment at 223–246 (VVQVWEALLTLVFFPVCVVFAWMA) threads the bilayer. Over 247 to 720 (DKRLLFYKYV…DGSREERLPS (474 aa)) the chain is Cytoplasmic. The segment at 248–267 (KRLLFYKYVYKRYRTDPRSG) is putative calmodulin-binding region. Calx-beta domains follow at residues 384 to 483 (GAGE…VRLL) and 512 to 612 (ATVT…IELG). Residues E407, D443, D468, D469, I471, E473, E476, D518, D519, D520, E536, D598, E599, and E600 each contribute to the Ca(2+) site. S622 carries the post-translational modification Phosphoserine. E665 is a Ca(2+) binding site. Residues 721–740 (CFDYVMHFLTVFWKVLFACV) traverse the membrane as a helical segment. Topologically, residues 741 to 747 (PPTEYCH) are extracellular. Residues 748–770 (GWACFGVSILVIGLLTALIGDLA) traverse the membrane as a helical segment. Residues 771–772 (SH) lie on the Cytoplasmic side of the membrane. A helical membrane pass occupies residues 773-791 (FGCTVGLKDSVNAVVFVAL). The stretch at 790–826 (ALGTSIPDTFASKVAALQDQCADASIGNVTGSNAVNV) is one Alpha-2 repeat. The Extracellular segment spans residues 792–822 (GTSIPDTFASKVAALQDQCADASIGNVTGSN). N817 carries N-linked (GlcNAc...) asparagine glycosylation. A helical transmembrane segment spans residues 823–843 (AVNVFLGLGVAWSVAAVYWAV). Residues 844-854 (QGRPFEVRTGT) lie on the Cytoplasmic side of the membrane. A helical membrane pass occupies residues 855–875 (LAFSVTLFTVFAFVGIAVLLY). Residues 876–892 (RRRPHIGGELGGPRGPK) are Extracellular-facing. Residues 893–909 (LATTALFLGLWLLYILF) traverse the membrane as a helical segment. The Cytoplasmic segment spans residues 910–921 (ASLEAYCHIRGF).

The protein belongs to the Ca(2+):cation antiporter (CaCA) (TC 2.A.19) family. SLC8 subfamily.

It localises to the cell membrane. The protein resides in the basolateral cell membrane. Its subcellular location is the perikaryon. It is found in the cell projection. The protein localises to the dendrite. It localises to the dendritic spine. It catalyses the reaction Ca(2+)(in) + 3 Na(+)(out) = Ca(2+)(out) + 3 Na(+)(in). Its activity is regulated as follows. Calcium transport is down-regulated by Na(+) and stimulated by Ca(2+). In terms of biological role, mediates the electrogenic exchange of Ca(2+) against Na(+) ions across the cell membrane, and thereby contributes to the regulation of cytoplasmic Ca(2+) levels and Ca(2+)-dependent cellular processes. Contributes to cellular Ca(2+) homeostasis in excitable cells. Contributes to the rapid decrease of cytoplasmic Ca(2+) levels back to baseline after neuronal activation, and thereby contributes to modulate synaptic plasticity, learning and memory. Plays a role in regulating urinary Ca(2+) and Na(+) excretion. The sequence is that of Sodium/calcium exchanger 2 (SLC8A2) from Homo sapiens (Human).